The primary structure comprises 488 residues: Kynurenine 3-monooxygenase 2 (488 aa).

Belongs to the aromatic-ring hydroxylase family. KMO subfamily. It depends on FAD as a cofactor.

It is found in the mitochondrion outer membrane. It carries out the reaction L-kynurenine + NADPH + O2 + H(+) = 3-hydroxy-L-kynurenine + NADP(+) + H2O. The protein operates within cofactor biosynthesis; NAD(+) biosynthesis; quinolinate from L-kynurenine: step 1/3. Catalyzes the hydroxylation of L-kynurenine (L-Kyn) to form 3-hydroxy-L-kynurenine (L-3OHKyn). Required for synthesis of quinolinic acid. This chain is Kynurenine 3-monooxygenase 2 (bna4-2), found in Aspergillus niger (strain ATCC MYA-4892 / CBS 513.88 / FGSC A1513).